Reading from the N-terminus, the 105-residue chain is UPF0166 protein aq_450 (105 aa).

This sequence belongs to the UPF0166 family.

This is UPF0166 protein aq_450 from Aquifex aeolicus (strain VF5).